Reading from the N-terminus, the 599-residue chain is Aspartate--tRNA(Asp/Asn) ligase (599 aa).

E172 is an L-aspartate binding site. An aspartate region spans residues Q196 to K199. R218 contacts L-aspartate. ATP is bound by residues R218–E220 and Q227. H451 is an L-aspartate binding site. An ATP-binding site is contributed by E485. R492 contributes to the L-aspartate binding site. Residue G537–R540 coordinates ATP.

It belongs to the class-II aminoacyl-tRNA synthetase family. Type 1 subfamily. Homodimer.

It is found in the cytoplasm. It catalyses the reaction tRNA(Asx) + L-aspartate + ATP = L-aspartyl-tRNA(Asx) + AMP + diphosphate. Functionally, aspartyl-tRNA synthetase with relaxed tRNA specificity since it is able to aspartylate not only its cognate tRNA(Asp) but also tRNA(Asn). Reaction proceeds in two steps: L-aspartate is first activated by ATP to form Asp-AMP and then transferred to the acceptor end of tRNA(Asp/Asn). The sequence is that of Aspartate--tRNA(Asp/Asn) ligase from Dechloromonas aromatica (strain RCB).